The sequence spans 388 residues: Processive diacylglycerol beta-glucosyltransferase (388 aa).

It belongs to the glycosyltransferase 28 family. UgtP subfamily.

It is found in the cell membrane. It carries out the reaction a 1,2-diacyl-3-O-(beta-D-glucopyranosyl)-sn-glycerol + UDP-alpha-D-glucose = a 1,2-diacyl-3-O-(beta-D-Glc-(1-&gt;6)-beta-D-Glc)-sn-glycerol + UDP + H(+). The catalysed reaction is a 1,2-diacyl-3-O-(beta-D-Glc-(1-&gt;6)-beta-D-Glc)-sn-glycerol + UDP-alpha-D-glucose = a 1,2-diacyl-3-O-(beta-D-Glc-(1-&gt;6)-beta-D-Glc-(1-&gt;6)-beta-D-Glc)-sn-glycerol + UDP + H(+). The enzyme catalyses a 1,2-diacyl-sn-glycerol + UDP-alpha-D-glucose = a 1,2-diacyl-3-O-(beta-D-glucopyranosyl)-sn-glycerol + UDP + H(+). It participates in glycolipid metabolism; diglucosyl-diacylglycerol biosynthesis. Processive glucosyltransferase involved in the biosynthesis of both the bilayer- and non-bilayer-forming membrane glucolipids. Is able to successively transfer up to three glucosyl residues to diacylglycerol (DAG), thereby catalyzing the formation of beta-monoglucosyl-DAG (3-O-(beta-D-glucopyranosyl)-1,2-diacyl-sn-glycerol), beta-diglucosyl-DAG (3-O-(beta-D-glucopyranosyl-beta-(1-&gt;6)-D-glucopyranosyl)-1,2-diacyl-sn-glycerol) and beta-triglucosyl-DAG (3-O-(beta-D-glucopyranosyl-beta-(1-&gt;6)-D-glucopyranosyl-beta-(1-&gt;6)-D-glucopyranosyl)-1,2-diacyl-sn-glycerol). Beta-diglucosyl-DAG is the predominant glycolipid found in Bacillales and is also used as a membrane anchor for lipoteichoic acid (LTA). The chain is Processive diacylglycerol beta-glucosyltransferase from Bacillus mycoides (strain KBAB4) (Bacillus weihenstephanensis).